The following is an 89-amino-acid chain: Small ribosomal subunit protein uS15 (89 aa).

It belongs to the universal ribosomal protein uS15 family. Part of the 30S ribosomal subunit. Forms a bridge to the 50S subunit in the 70S ribosome, contacting the 23S rRNA.

In terms of biological role, one of the primary rRNA binding proteins, it binds directly to 16S rRNA where it helps nucleate assembly of the platform of the 30S subunit by binding and bridging several RNA helices of the 16S rRNA. Forms an intersubunit bridge (bridge B4) with the 23S rRNA of the 50S subunit in the ribosome. The protein is Small ribosomal subunit protein uS15 of Paraburkholderia phymatum (strain DSM 17167 / CIP 108236 / LMG 21445 / STM815) (Burkholderia phymatum).